A 119-amino-acid polypeptide reads, in one-letter code: Multi-drug resistance efflux pump PmrA homolog (119 aa).

4 consecutive transmembrane segments (helical) span residues 1–20, 22–42, 64–84, and 88–108; these read ILIGLVFTFVIYLPMAFVQS, LQLGILRFLLGFGAGALMPSV, MCSNLGMVTGPLVGSAIAGYI, and AAIVGTSLFVIVNIIWSFINF.

This sequence belongs to the major facilitator superfamily.

Its subcellular location is the cell membrane. The chain is Multi-drug resistance efflux pump PmrA homolog (pmrA) from Lactococcus lactis subsp. cremoris (Streptococcus cremoris).